Here is a 124-residue protein sequence, read N- to C-terminus: Acidic phospholipase A2 (124 aa).

Intrachain disulfides connect C26–C116, C28–C44, C43–C95, C49–C124, C50–C88, C57–C81, and C75–C86. 3 residues coordinate Ca(2+): Y27, G29, and G31. The active site involves H47. Ca(2+) is bound at residue D48. Residue D89 is part of the active site.

The protein belongs to the phospholipase A2 family. Group II subfamily. D49 sub-subfamily. It depends on Ca(2+) as a cofactor. Expressed by the venom gland.

It is found in the secreted. The catalysed reaction is a 1,2-diacyl-sn-glycero-3-phosphocholine + H2O = a 1-acyl-sn-glycero-3-phosphocholine + a fatty acid + H(+). In terms of biological role, snake venom phospholipase A2 (PLA2) that inhibits ADP-induced platelet aggregation. PLA2 catalyzes the calcium-dependent hydrolysis of the 2-acyl groups in 3-sn-phosphoglycerides. In Gloydius ussuriensis (Ussuri mamushi), this protein is Acidic phospholipase A2.